Consider the following 378-residue polypeptide: Ecotin-like protein 3 (378 aa).

Disordered regions lie at residues 191-216 (HRLS…HAAP) and 238-378 (PQNN…KADP). Residues 274–287 (NEPSPSRPRLSSTE) are compositionally biased toward polar residues. Basic and acidic residues predominate over residues 337 to 348 (RKAEDNVYEKTM). The span at 362–378 (KASASSKKSGNGSKADP) shows a compositional bias: low complexity.

The protein belongs to the protease inhibitor I11 (ecotin) family.

In Leishmania infantum, this protein is Ecotin-like protein 3.